Reading from the N-terminus, the 185-residue chain is Ribosome-recycling factor (185 aa).

Belongs to the RRF family.

Its subcellular location is the cytoplasm. Its function is as follows. Responsible for the release of ribosomes from messenger RNA at the termination of protein biosynthesis. May increase the efficiency of translation by recycling ribosomes from one round of translation to another. The protein is Ribosome-recycling factor of Clostridium acetobutylicum (strain ATCC 824 / DSM 792 / JCM 1419 / IAM 19013 / LMG 5710 / NBRC 13948 / NRRL B-527 / VKM B-1787 / 2291 / W).